The following is a 267-amino-acid chain: Potassium channel regulatory protein (267 aa).

In terms of domain architecture, BTB spans 5–74; the sequence is ELVTLNVGGK…LRTQQLLLPT (70 aa).

In terms of assembly, can form homooligomers. Interacts with KCNA1 (via cytoplasmic N-terminal domain) and KCNA4.

Its subcellular location is the endoplasmic reticulum. Its function is as follows. Inhibits potassium fluxes in cells. May regulate Kv1 family channel proteins by retaining a fraction of channels in endomembranes. The protein is Potassium channel regulatory protein (KCNRG) of Bos taurus (Bovine).